Here is a 180-residue protein sequence, read N- to C-terminus: NADH-quinone oxidoreductase subunit I (180 aa).

4Fe-4S ferredoxin-type domains are found at residues 50 to 80 (LTRN…LQKS) and 90 to 119 (KFFR…LMPD). [4Fe-4S] cluster contacts are provided by Cys60, Cys63, Cys66, Cys70, Cys99, Cys102, Cys105, and Cys109.

It belongs to the complex I 23 kDa subunit family. In terms of assembly, NDH-1 is composed of 13 different subunits. Subunits NuoA, H, J, K, L, M, N constitute the membrane sector of the complex. [4Fe-4S] cluster serves as cofactor.

It is found in the cell membrane. The enzyme catalyses a quinone + NADH + 5 H(+)(in) = a quinol + NAD(+) + 4 H(+)(out). Its function is as follows. NDH-1 shuttles electrons from NADH, via FMN and iron-sulfur (Fe-S) centers, to quinones in the respiratory chain. The immediate electron acceptor for the enzyme in this species is believed to be ubiquinone. Couples the redox reaction to proton translocation (for every two electrons transferred, four hydrogen ions are translocated across the cytoplasmic membrane), and thus conserves the redox energy in a proton gradient. The chain is NADH-quinone oxidoreductase subunit I from Buchnera aphidicola subsp. Schizaphis graminum (strain Sg).